A 462-amino-acid polypeptide reads, in one-letter code: Chitinase 1 (462 aa).

Residues 1-17 form the signal peptide; the sequence is MILNLIILLAISIVASA. In terms of domain architecture, GH18 spans 18–291; that stretch reads SNIAAYWGQN…NQLHQALSGS (274 aa). The N-linked (GlcNAc...) asparagine glycan is linked to N57. E147 acts as the Proton donor in catalysis.

The protein belongs to the glycosyl hydrolase 18 family. Chitinase class V subfamily.

It localises to the secreted. The catalysed reaction is Random endo-hydrolysis of N-acetyl-beta-D-glucosaminide (1-&gt;4)-beta-linkages in chitin and chitodextrins.. Its function is as follows. Chitinase involved in the remodeling of chitin in the fungal cell wall. Plays a role in cell separation. This is Chitinase 1 (CHT1) from Candida albicans (strain SC5314 / ATCC MYA-2876) (Yeast).